Here is a 429-residue protein sequence, read N- to C-terminus: SVP1-like protein 2 (429 aa).

WD repeat units lie at residues 10-48 (PVLAPVLSVTFNHDNSCFAVGLDHGFRIYESGSCVLRTS), 50-96 (DFGA…QVGV), 178-218 (AHTS…RLYE), and 223-262 (IDKAIIFSIGFSPSGKYLACTSDKSTLHVFDVTRPGGTRP). Residues 262–297 (PITSNGGTAYAAGEPSVTGNNRPSSPYSVASSSGGG) form a disordered region.

It belongs to the WD repeat PROPPIN family.

It is found in the vacuole membrane. Its subcellular location is the cytoplasmic vesicle membrane. Its function is as follows. Involved in mitochondrial or peroxisomal functions and amino acid signaling pathways. The polypeptide is SVP1-like protein 2 (apg-14) (Neurospora crassa (strain ATCC 24698 / 74-OR23-1A / CBS 708.71 / DSM 1257 / FGSC 987)).